The chain runs to 159 residues: Small ribosomal subunit protein uS7 (159 aa).

It belongs to the universal ribosomal protein uS7 family. Part of the 30S ribosomal subunit. Contacts proteins S9 and S11.

In terms of biological role, one of the primary rRNA binding proteins, it binds directly to 16S rRNA where it nucleates assembly of the head domain of the 30S subunit. Is located at the subunit interface close to the decoding center, probably blocks exit of the E-site tRNA. In Rickettsia felis (strain ATCC VR-1525 / URRWXCal2) (Rickettsia azadi), this protein is Small ribosomal subunit protein uS7.